A 231-amino-acid chain; its full sequence is 7-cyano-7-deazaguanine synthase (231 aa).

An ATP-binding site is contributed by 8 to 18; the sequence is FSGGQDSTTCL. Zn(2+)-binding residues include C188, C197, C200, and C203.

Belongs to the QueC family. Zn(2+) is required as a cofactor.

It catalyses the reaction 7-carboxy-7-deazaguanine + NH4(+) + ATP = 7-cyano-7-deazaguanine + ADP + phosphate + H2O + H(+). It participates in purine metabolism; 7-cyano-7-deazaguanine biosynthesis. Catalyzes the ATP-dependent conversion of 7-carboxy-7-deazaguanine (CDG) to 7-cyano-7-deazaguanine (preQ(0)). This Salmonella paratyphi B (strain ATCC BAA-1250 / SPB7) protein is 7-cyano-7-deazaguanine synthase.